The chain runs to 155 residues: SsrA-binding protein (155 aa).

It belongs to the SmpB family.

It localises to the cytoplasm. Its function is as follows. Required for rescue of stalled ribosomes mediated by trans-translation. Binds to transfer-messenger RNA (tmRNA), required for stable association of tmRNA with ribosomes. tmRNA and SmpB together mimic tRNA shape, replacing the anticodon stem-loop with SmpB. tmRNA is encoded by the ssrA gene; the 2 termini fold to resemble tRNA(Ala) and it encodes a 'tag peptide', a short internal open reading frame. During trans-translation Ala-aminoacylated tmRNA acts like a tRNA, entering the A-site of stalled ribosomes, displacing the stalled mRNA. The ribosome then switches to translate the ORF on the tmRNA; the nascent peptide is terminated with the 'tag peptide' encoded by the tmRNA and targeted for degradation. The ribosome is freed to recommence translation, which seems to be the essential function of trans-translation. This is SsrA-binding protein from Streptococcus pneumoniae (strain P1031).